A 166-amino-acid chain; its full sequence is Putative 4-hydroxy-4-methyl-2-oxoglutarate aldolase 3 (166 aa).

The residue at position 2 (Ala2) is an N-acetylalanine. Residues 81 to 84 (GGNL) and Arg103 contribute to the substrate site. Asp104 is an a divalent metal cation binding site.

It belongs to the class II aldolase/RraA-like family. In terms of assembly, homotrimer. A divalent metal cation serves as cofactor.

It catalyses the reaction 4-hydroxy-4-methyl-2-oxoglutarate = 2 pyruvate. The catalysed reaction is oxaloacetate + H(+) = pyruvate + CO2. Functionally, catalyzes the aldol cleavage of 4-hydroxy-4-methyl-2-oxoglutarate (HMG) into 2 molecules of pyruvate. Also contains a secondary oxaloacetate (OAA) decarboxylase activity due to the common pyruvate enolate transition state formed following C-C bond cleavage in the retro-aldol and decarboxylation reactions. This is Putative 4-hydroxy-4-methyl-2-oxoglutarate aldolase 3 from Arabidopsis thaliana (Mouse-ear cress).